A 263-amino-acid chain; its full sequence is Receptor-transporting protein 1 (263 aa).

The Cytoplasmic portion of the chain corresponds to 1 to 238; it reads MRIFRPWRLR…ETGSGWNFCS (238 aa). The 3CxxC-type zinc-finger motif lies at 88 to 197; it reads ASGRFHCSWC…GEFCEACQEG (110 aa). Residues 239-259 form a helical membrane-spanning segment; the sequence is IPWCLFWATVLLLIIYLQLSF. The Extracellular segment spans residues 260 to 263; the sequence is RSSV.

Belongs to the TMEM7 family. Interacts with olfactory receptors.

It is found in the cell membrane. Its function is as follows. Specifically promotes functional cell surface expression of olfactory receptors, but not of other GPCRs. The polypeptide is Receptor-transporting protein 1 (RTP1) (Macaca fascicularis (Crab-eating macaque)).